Here is a 442-residue protein sequence, read N- to C-terminus: MAHTSDGWGAPYDNQTYVEAYEQLEIALLEPLDRILETANVEEFRPKFKNHQDPNDRKNKKNNDEEWRDSIYNIATDESDTDDHEQRKNFFQPPLQVQRNSFVKNTLMEFKRSSQIDISRLAVMGCGEMSLEKGICEYLGSFGTINVLSVDIDEPSLSIGQQLLGKHLERNAEILAVETGLPVLMRSYVGDILEPDHRFADVDAIVSMEVVEHIPLPNAKKFVENVLGTLMPRIFIFSTPNHEYNAVFGMEPGEFRHGDHKFEMNRKEFSNWLEELSIRFPHYQIDPPHYIGMTRGYENLSGASQAAVCRLQVDLNTTLPQEVTPYEMVGHLPCRLGSRLIAYNLVKEAFLDWLEKIELQEHEPRTDGYSPYWIFNVQNILHHLKAPVSFALTIDEKVAIKYIQGMTSRKVHAEYSHGFNGIVILQMHSKEELIKTVQDNTL.

S-adenosyl-L-methionine-binding residues include glycine 125 and aspartate 151. Glutamate 209, glutamate 212, histidine 213, and histidine 260 together coordinate Mg(2+).

This sequence belongs to the methyltransferase superfamily. HEN1 family. It depends on Mg(2+) as a cofactor. Broadly expressed in the germline and somatic tissues in both hermaphrodites and males.

The protein localises to the cytoplasm. Its subcellular location is the nucleus. The protein resides in the nucleoplasm. It is found in the cytoplasmic granule. It catalyses the reaction small RNA 3'-end nucleotide + S-adenosyl-L-methionine = small RNA 3'-end 2'-O-methylnucleotide + S-adenosyl-L-homocysteine + H(+). Functionally, methyltransferase that adds a 2'-O-methyl group at the 3'-end of PIWI-interacting RNAs (piRNAs) and small interfering RNAs (siRNAs) which are classes of regulatory RNAs that are involved in gene silencing in endogenous RNA interference (RNAi) pathways. Methylation protects the 3'-end of small RNAs from tailing and trimming and could constitute a recognition signal for appropriate argonaute machineries. Methylates and stabilizes 26G-siRNAs (a class of 26 nucleotide siRNAs that possess a monophosphorylated guanine residue at the 5'-end) when they are bound by argonaute protein ergo-1. This occurs in the female germline and embryo, but not in the male germline. Does not methylate 26G-siRNAs bound by argonaute proteins alg-3 or alg-4. Methylates and stabilizes 21U-piRNAs, which are a class of 21 nucleotide piRNAs that possess a uracil residue at the 5'-end, in the male and female germline. In addition, may play a role in exogenous RNAi (exoRNAi) pathways in the germline. In Caenorhabditis elegans, this protein is Small RNA 2'-O-methyltransferase.